Consider the following 349-residue polypeptide: Protein RecA (349 aa).

ATP is bound at residue 65–72 (GPESSGKT). A disordered region spans residues 329–349 (FDGDVDENENEDDSPKTLFDE). Acidic residues predominate over residues 331–340 (GDVDENENED).

This sequence belongs to the RecA family.

The protein resides in the cytoplasm. Its function is as follows. Can catalyze the hydrolysis of ATP in the presence of single-stranded DNA, the ATP-dependent uptake of single-stranded DNA by duplex DNA, and the ATP-dependent hybridization of homologous single-stranded DNAs. It interacts with LexA causing its activation and leading to its autocatalytic cleavage. The sequence is that of Protein RecA from Staphylococcus epidermidis (strain ATCC 35984 / DSM 28319 / BCRC 17069 / CCUG 31568 / BM 3577 / RP62A).